A 151-amino-acid polypeptide reads, in one-letter code: HTH-type transcriptional regulator FL11 (151 aa).

In terms of domain architecture, HTH asnC-type spans 5 to 66; that stretch reads LDEIDKKIIK…IIDPEALGYS (62 aa). The H-T-H motif DNA-binding region spans 24–43; sequence LREISKITGLAESTIHERIR. 98 to 104 contributes to the L-arginine binding site; sequence ETTGDYD. L-lysine is bound by residues N118, D122, and 133–135; that span reads THT. Residues D122 and 133-135 contribute to the L-arginine site; that span reads THT.

As to quaternary structure, homodimer. Binds DNA as a dimer and an octamer. The octamer formed with lysine is stable in solution, but the octamer formed with arginine is unstable without DNA. When crystallized in the absence of DNA, dimers are assembled into helical cylinders with six dimers per turn. In solution, predominantly behaves as a dimer.

Its activity is regulated as follows. In the famine mode, FL11 forms dimers and acts as a repressor, leading to growth arrest. In the feast mode, in the presence of high concentrations of lysine or arginine, four dimers assemble into an octamer and cover the fl11 and lysine biosynthesis promoters. This leads to the inhibition of fl11 expression and lysine biosynthesis, decrease of the FL11 concentration in the cell, derepression of the target genes and activation of the metabolism. DNA-binding protein involved in the repression of transcription of a large number of genes, thereby arresting growth, in response to environmental changes. Binding sites are identified in promoters of approximately 200 transcription units, including genes involved in ATP synthesis, transmembrane transport, translation and DNA synthesis. The sequence is that of HTH-type transcriptional regulator FL11 from Pyrococcus horikoshii (strain ATCC 700860 / DSM 12428 / JCM 9974 / NBRC 100139 / OT-3).